Consider the following 366-residue polypeptide: Type 2 DNA topoisomerase 6 subunit A (366 aa).

The Topo IIA-type catalytic domain occupies 7-146 (SDETEARDQL…FHMRPEESGA (140 aa)). Tyr101 acts as the O-(5'-phospho-DNA)-tyrosine intermediate in catalysis. Residues Glu199 and Asp251 each coordinate Mg(2+).

The protein belongs to the TOP6A family. Homodimer. Heterotetramer of two Top6A and two Top6B chains. Requires Mg(2+) as cofactor.

The enzyme catalyses ATP-dependent breakage, passage and rejoining of double-stranded DNA.. Functionally, relaxes both positive and negative superturns and exhibits a strong decatenase activity. In Halobacterium salinarum (strain ATCC 700922 / JCM 11081 / NRC-1) (Halobacterium halobium), this protein is Type 2 DNA topoisomerase 6 subunit A.